The chain runs to 146 residues: Hemoglobin subunit beta (146 aa).

Valine 1 bears the N-acetylvaline mark. The Globin domain occupies 2-146 (HLTAEEKSAV…VANALAHKYH (145 aa)). Phosphothreonine is present on threonine 12. The residue at position 44 (serine 44) is a Phosphoserine. Lysine 59 carries the N6-acetyllysine modification. Histidine 63 contacts heme b. Residue lysine 82 is modified to N6-acetyllysine. Residue histidine 92 coordinates heme b. Cysteine 93 is subject to S-nitrosocysteine. The residue at position 144 (lysine 144) is an N6-acetyllysine.

The protein belongs to the globin family. As to quaternary structure, heterotetramer of two alpha chains and two beta chains. In terms of tissue distribution, red blood cells.

Involved in oxygen transport from the lung to the various peripheral tissues. This is Hemoglobin subunit beta (HBB) from Meles meles (Eurasian badger).